The primary structure comprises 136 residues: Large ribosomal subunit protein uL16 (136 aa).

It belongs to the universal ribosomal protein uL16 family. Part of the 50S ribosomal subunit.

Functionally, binds 23S rRNA and is also seen to make contacts with the A and possibly P site tRNAs. The chain is Large ribosomal subunit protein uL16 from Yersinia enterocolitica serotype O:8 / biotype 1B (strain NCTC 13174 / 8081).